Here is a 114-residue protein sequence, read N- to C-terminus: Evasin P1096 (114 aa).

Residues 1–23 (MELNAFTILHIAVFIAVGYYANT) form the signal peptide. 3 disulfides stabilise this stretch: Cys47-Cys65, Cys51-Cys67, and Cys61-Cys78. Residue Asn50 is glycosylated (N-linked (GlcNAc...) asparagine). The tract at residues 89-114 (DPSQDPSIDEAAPRESVSKRRSNGES) is disordered. The span at 99–114 (AAPRESVSKRRSNGES) shows a compositional bias: basic and acidic residues.

It is found in the secreted. Its function is as follows. Salivary chemokine-binding protein which binds to host chemokine CXCL8. The protein is Evasin P1096 of Ixodes ricinus (Common tick).